The following is a 487-amino-acid chain: Serralysin (487 aa).

A propeptide spanning residues 1–16 (MQSTKKAIEITESSLA) is cleaved from the precursor. Residue His192 participates in Zn(2+) binding. Residue Glu193 is part of the active site. Residues His196, His202, and Tyr232 each coordinate Zn(2+). Positions 269, 271, 273, 301, 303, 304, 306, 343, 345, 350, 352, 354, 359, 361, 363, 367, 368, 369, 370, 372, 376, 377, 378, 379, 381, 385, 386, 387, 388, 390, 399, 406, and 416 each coordinate Ca(2+). 2 Hemolysin-type calcium-binding repeats span residues 348 to 365 (IGGS…NNVL) and 366 to 383 (KGGA…ADEL).

It belongs to the peptidase M10B family. Ca(2+) serves as cofactor. It depends on Zn(2+) as a cofactor.

Its subcellular location is the secreted. The catalysed reaction is Preferential cleavage of bonds with hydrophobic residues in P1'.. Functionally, has insecticidal activity against the locust M.palpalis. When administered orally to locusts at a low dose it causes them to lie on their sides exhibiting sporadic limb movements and muscular twitching, followed by full recovery. When administered at higher doses the same symptoms are observed, followed by death. This chain is Serralysin, found in Serratia marcescens.